Consider the following 239-residue polypeptide: Probable 2-phosphosulfolactate phosphatase (239 aa).

This sequence belongs to the ComB family. Mg(2+) serves as cofactor.

The enzyme catalyses (2R)-O-phospho-3-sulfolactate + H2O = (2R)-3-sulfolactate + phosphate. In Clostridium botulinum (strain Langeland / NCTC 10281 / Type F), this protein is Probable 2-phosphosulfolactate phosphatase.